A 322-amino-acid polypeptide reads, in one-letter code: ATP-dependent 6-phosphofructokinase (322 aa).

Gly11 lines the ATP pocket. 21–25 lines the ADP pocket; that stretch reads RAVTR. ATP-binding positions include 72 to 73 and 102 to 105; these read RC and GDGS. Mg(2+) is bound at residue Asp103. 127-129 is a substrate binding site; it reads TID. Asp129 (proton acceptor) is an active-site residue. An ADP-binding site is contributed by Arg156. Substrate contacts are provided by residues Arg164 and 171-173; that span reads MGR. Residues 187-189, Arg213, and 215-217 each bind ADP; these read GAE and KKH. Residues Glu224, Arg245, and 251 to 254 each bind substrate; that span reads HIQR.

Belongs to the phosphofructokinase type A (PFKA) family. ATP-dependent PFK group I subfamily. Prokaryotic clade 'B1' sub-subfamily. In terms of assembly, homotetramer. Mg(2+) is required as a cofactor.

The protein localises to the cytoplasm. It carries out the reaction beta-D-fructose 6-phosphate + ATP = beta-D-fructose 1,6-bisphosphate + ADP + H(+). Its pathway is carbohydrate degradation; glycolysis; D-glyceraldehyde 3-phosphate and glycerone phosphate from D-glucose: step 3/4. Allosterically activated by ADP and other diphosphonucleosides, and allosterically inhibited by phosphoenolpyruvate. Functionally, catalyzes the phosphorylation of D-fructose 6-phosphate to fructose 1,6-bisphosphate by ATP, the first committing step of glycolysis. In Staphylococcus epidermidis (strain ATCC 12228 / FDA PCI 1200), this protein is ATP-dependent 6-phosphofructokinase.